The chain runs to 432 residues: Luc7-like protein 3 (432 aa).

Met-1 is subject to N-acetylmethionine. Phosphoserine is present on residues Ser-3, Ser-110, and Ser-115. Residues 124 to 181 are a coiled coil; the sequence is KNEEKIQVLTDKIDVLLQQIEELGSEGKVEEAQGMMKLVEQLKEERELLRSTTSTIES. At Lys-231 the chain carries N6-acetyllysine. Over residues 234-287 the composition is skewed to basic and acidic residues; sequence LRKRTEEPDRDERLKKEKQEREEREKEREREREERERKRRREEEEREKERARDR. The interval 234-432 is disordered; sequence LRKRTEEPDR…IKSEGDTQSN (199 aa). A compositionally biased stretch (basic residues) spans 288–301; sequence ERRKRSRSRSRHSS. Residues 302–311 are compositionally biased toward basic and acidic residues; the sequence is RTSDRRCSRS. The span at 312–367 shows a compositional bias: basic residues; it reads RDHKRSRSRDRRRSRSRDRRRSRSHDRSERKHRSRSRDRRRSKSRDRKSYKHRSKS. Positions 368–414 are enriched in basic and acidic residues; it reads RDREQDRKSKEKEKKGSDDKKSSVKSSSREKQSEDTNPESKESDTKN. Position 420 is a phosphoserine (Ser-420). A compositionally biased stretch (basic and acidic residues) spans 421 to 432; that stretch reads EDIKSEGDTQSN. Lys-424 participates in a covalent cross-link: Glycyl lysine isopeptide (Lys-Gly) (interchain with G-Cter in SUMO1); alternate. Lys-424 is covalently cross-linked (Glycyl lysine isopeptide (Lys-Gly) (interchain with G-Cter in SUMO2); alternate). Ser-425 and Ser-431 each carry phosphoserine.

The protein belongs to the Luc7 family. May interact with SFRS1 and form homodimers. Interacts with JMJD6. Interacts with RBM25. Interacts with RSRC1 (via Arg/Ser-rich domain). Interacts with RRP1B.

The protein localises to the nucleus speckle. In terms of biological role, binds cAMP regulatory element DNA sequence. May play a role in RNA splicing. The chain is Luc7-like protein 3 (Luc7l3) from Mus musculus (Mouse).